The sequence spans 157 residues: Epithelial membrane protein 1 (157 aa).

The helical transmembrane segment at 1–21 (MLVLLAGIFVVHIATVIMLFV) threads the bilayer. N-linked (GlcNAc...) asparagine glycosylation is found at N43 and N46. The next 3 membrane-spanning stretches (helical) occupy residues 67 to 87 (FMILSIIFCVIALLVFVFQLF), 95 to 115 (FFLSGATTLVCWLCILVGVSI), and 134 to 154 (YILGWICFCFSFIIGVLYLVL).

The protein belongs to the PMP-22/EMP/MP20 family.

The protein localises to the membrane. The protein is Epithelial membrane protein 1 (EMP1) of Homo sapiens (Human).